The sequence spans 74 residues: U5-theraphotoxin-Cg1a (74 aa).

A signal peptide spans Met-1 to Ala-19. Positions Ala-20 to Arg-39 are excised as a propeptide. 3 disulfides stabilise this stretch: Cys-42/Cys-56, Cys-49/Cys-61, and Cys-55/Cys-71.

Belongs to the neurotoxin 36 family. 01 subfamily. As to expression, expressed by the venom gland.

It is found in the secreted. In terms of biological role, probable ion channel inhibitor. In Chilobrachys guangxiensis (Chinese earth tiger tarantula), this protein is U5-theraphotoxin-Cg1a.